The following is a 477-amino-acid chain: UDP-N-acetylmuramoylalanine--D-glutamate ligase (477 aa).

125 to 131 serves as a coordination point for ATP; it reads GTNGKST.

This sequence belongs to the MurCDEF family.

The protein localises to the cytoplasm. The enzyme catalyses UDP-N-acetyl-alpha-D-muramoyl-L-alanine + D-glutamate + ATP = UDP-N-acetyl-alpha-D-muramoyl-L-alanyl-D-glutamate + ADP + phosphate + H(+). Its pathway is cell wall biogenesis; peptidoglycan biosynthesis. Its function is as follows. Cell wall formation. Catalyzes the addition of glutamate to the nucleotide precursor UDP-N-acetylmuramoyl-L-alanine (UMA). In Rhodospirillum rubrum (strain ATCC 11170 / ATH 1.1.1 / DSM 467 / LMG 4362 / NCIMB 8255 / S1), this protein is UDP-N-acetylmuramoylalanine--D-glutamate ligase.